The primary structure comprises 674 residues: 1,4-alpha-glucan branching enzyme GlgB 1 (674 aa).

D336 serves as the catalytic Nucleophile. E389 (proton donor) is an active-site residue.

Belongs to the glycosyl hydrolase 13 family. GlgB subfamily. In terms of assembly, monomer.

The enzyme catalyses Transfers a segment of a (1-&gt;4)-alpha-D-glucan chain to a primary hydroxy group in a similar glucan chain.. It functions in the pathway glycan biosynthesis; glycogen biosynthesis. Its function is as follows. Catalyzes the formation of the alpha-1,6-glucosidic linkages in glycogen by scission of a 1,4-alpha-linked oligosaccharide from growing alpha-1,4-glucan chains and the subsequent attachment of the oligosaccharide to the alpha-1,6 position. This is 1,4-alpha-glucan branching enzyme GlgB 1 from Clostridium perfringens (strain SM101 / Type A).